The sequence spans 91 residues: Defensin-like protein 269 (91 aa).

The signal sequence occupies residues M1–A25. Cystine bridges form between C41–C82, C53–C72, C59–C77, and C63–C79.

Belongs to the DEFL family.

It is found in the secreted. The protein is Defensin-like protein 269 of Arabidopsis thaliana (Mouse-ear cress).